The sequence spans 29 residues: Cytochrome b6-f complex subunit 8 (29 aa).

The chain crosses the membrane as a helical span at residues 3-23; sequence IVSIAWAALMVVFTFSLSLVV.

Belongs to the PetN family. In terms of assembly, the 4 large subunits of the cytochrome b6-f complex are cytochrome b6, subunit IV (17 kDa polypeptide, PetD), cytochrome f and the Rieske protein, while the 4 small subunits are PetG, PetL, PetM and PetN. The complex functions as a dimer.

The protein localises to the plastid. It localises to the chloroplast thylakoid membrane. In terms of biological role, component of the cytochrome b6-f complex, which mediates electron transfer between photosystem II (PSII) and photosystem I (PSI), cyclic electron flow around PSI, and state transitions. The sequence is that of Cytochrome b6-f complex subunit 8 from Angiopteris evecta (Mule's foot fern).